The sequence spans 457 residues: Heme sensor protein HssS (457 aa).

Helical transmembrane passes span 9–29 (IAIY…VLTN) and 164–184 (TFLA…VIAS). The HAMP domain maps to 186–238 (YSIIRPVKKLKLATERLIDGDFETPIKQTRKDEIGTLQYHFNKMRESLGQVDQ). Positions 246–456 (NVSHEIKTPL…TFTITLPNNS (211 aa)) constitute a Histidine kinase domain. His-249 bears the Phosphohistidine; by autocatalysis mark.

In terms of processing, autophosphorylated.

It localises to the cell membrane. It carries out the reaction ATP + protein L-histidine = ADP + protein N-phospho-L-histidine.. Member of the two-component regulatory system HssS/HssR involved in intracellular heme homeostasis and tempering of staphylococcal virulence. HssS functions as a heme sensor histidine kinase which is autophosphorylated at a histidine residue and transfers its phosphate group to an aspartate residue of HssR. HssR/HssS activates the expression of hrtAB, an efflux pump, in response to extracellular heme, hemin, hemoglobin or blood. This Staphylococcus aureus (strain MSSA476) protein is Heme sensor protein HssS (hssS).